A 516-amino-acid polypeptide reads, in one-letter code: MSREKYYLTTPIFYPNGKPHIGHAYTVIATDALARFQRLDGKDVFFLTGTDEHGLKMQQTAEKEGITPQALADRNSAIFRSMTEAVGGSNDEYIRTTEPRHYASCQAIWKAMAANGDIYLDRYSGWYSVRQEAYFDESETTLGEDGVRREPLGSPVEWNEEESYFFRLSAYQDKLLALYESQPDFVGPAERRNEVMSFVKSGLKDLSISRTTFKWGVPVPGDDKHVMYVWVDALTNYITAAGYPDTKSDQWRYWPATHIIGKDIVRFHAVYWPAFLMSAGIELPKRVFAHGFLFNRGEKMSKSVGNVVDPFALIEHYGLDQVRYFFLREVPFGQDGSYSHDAIVNRTNADLANGLGNLAQRSLSMIAKNCGGVVPKRGEMTDADSAILDQAVAALTTARKAMAGQGIHLALAAIFDVVAEADRYFAGQAPWALKKTDPERMETVLWTTAELVRRVAVLCQPFIPGSAAKLLDLLAVPADKRDFVHVHADYALVPGTALPAPEGVFPRYVEQPGANA.

Positions 13–23 (FYPNGKPHIGH) match the 'HIGH' region motif. The 'KMSKS' region motif lies at 299–303 (KMSKS). Position 302 (K302) interacts with ATP.

This sequence belongs to the class-I aminoacyl-tRNA synthetase family. MetG type 2B subfamily. As to quaternary structure, monomer.

The protein resides in the cytoplasm. The catalysed reaction is tRNA(Met) + L-methionine + ATP = L-methionyl-tRNA(Met) + AMP + diphosphate. Is required not only for elongation of protein synthesis but also for the initiation of all mRNA translation through initiator tRNA(fMet) aminoacylation. The chain is Methionine--tRNA ligase from Mesorhizobium japonicum (strain LMG 29417 / CECT 9101 / MAFF 303099) (Mesorhizobium loti (strain MAFF 303099)).